We begin with the raw amino-acid sequence, 418 residues long: Glycine betaine transport ATP-binding protein OpuAA (418 aa).

The region spanning 34 to 270 (KTKKEILKAT…PSNEYVEKFV (237 aa)) is the ABC transporter domain. 66–73 (GLSGSGKS) lines the ATP pocket. CBS domains are found at residues 284 to 340 (IMKR…DLSL) and 344 to 403 (LNTE…INAE).

It belongs to the ABC transporter superfamily. The complex is composed of two ATP-binding proteins (OpuAA), two transmembrane proteins (OpuAB) and a solute-binding protein (OpuAC).

The enzyme catalyses a quaternary ammonium(out) + ATP + H2O = a quaternary ammonium(in) + ADP + phosphate + H(+). Involved in a multicomponent binding-protein-dependent transport system for glycine betaine. Probably responsible for energy coupling to the transport system. The chain is Glycine betaine transport ATP-binding protein OpuAA (opuAA) from Bacillus subtilis (strain 168).